Reading from the N-terminus, the 413-residue chain is Chloramphenicol resistance protein CraA (413 aa).

12 helical membrane-spanning segments follow: residues Leu-18–Ile-38, Trp-55–Gly-75, Lys-84–Thr-104, Phe-110–Ala-130, Leu-147–Ile-167, Val-170–Leu-190, Ala-228–Val-248, Leu-260–Ile-280, Val-289–Trp-309, Tyr-312–Phe-332, Thr-349–Val-369, and Tyr-373–Phe-393.

This sequence belongs to the major facilitator superfamily.

Its subcellular location is the cell inner membrane. Its function is as follows. Efflux pump that mediates resistance to chloramphenicol. This chain is Chloramphenicol resistance protein CraA, found in Acinetobacter baumannii (strain ATCC 19606 / DSM 30007 / JCM 6841 / CCUG 19606 / CIP 70.34 / NBRC 109757 / NCIMB 12457 / NCTC 12156 / 81).